Reading from the N-terminus, the 393-residue chain is 1-deoxy-D-xylulose 5-phosphate reductoisomerase (393 aa).

The NADPH site is built by threonine 10, glycine 11, serine 12, isoleucine 13, arginine 37, and asparagine 124. Lysine 125 is a 1-deoxy-D-xylulose 5-phosphate binding site. Residue glutamate 126 participates in NADPH binding. Aspartate 150 contacts Mn(2+). The 1-deoxy-D-xylulose 5-phosphate site is built by serine 151, glutamate 152, serine 182, and histidine 205. Glutamate 152 contributes to the Mn(2+) binding site. Residue glycine 211 participates in NADPH binding. 1-deoxy-D-xylulose 5-phosphate is bound by residues serine 218, asparagine 223, lysine 224, and glutamate 227. Residue glutamate 227 participates in Mn(2+) binding.

It belongs to the DXR family. Requires Mg(2+) as cofactor. Mn(2+) serves as cofactor.

It catalyses the reaction 2-C-methyl-D-erythritol 4-phosphate + NADP(+) = 1-deoxy-D-xylulose 5-phosphate + NADPH + H(+). It participates in isoprenoid biosynthesis; isopentenyl diphosphate biosynthesis via DXP pathway; isopentenyl diphosphate from 1-deoxy-D-xylulose 5-phosphate: step 1/6. Functionally, catalyzes the NADPH-dependent rearrangement and reduction of 1-deoxy-D-xylulose-5-phosphate (DXP) to 2-C-methyl-D-erythritol 4-phosphate (MEP). This chain is 1-deoxy-D-xylulose 5-phosphate reductoisomerase, found in Nitrosococcus oceani (strain ATCC 19707 / BCRC 17464 / JCM 30415 / NCIMB 11848 / C-107).